We begin with the raw amino-acid sequence, 346 residues long: tRNA N6-adenosine threonylcarbamoyltransferase (346 aa).

His111 and His115 together coordinate Fe cation. Substrate-binding positions include 134–138 (LVSGG), Asp167, Gly180, Asp184, and Asn280. Fe cation is bound at residue Asp308.

Belongs to the KAE1 / TsaD family. It depends on Fe(2+) as a cofactor.

It localises to the cytoplasm. It carries out the reaction L-threonylcarbamoyladenylate + adenosine(37) in tRNA = N(6)-L-threonylcarbamoyladenosine(37) in tRNA + AMP + H(+). Functionally, required for the formation of a threonylcarbamoyl group on adenosine at position 37 (t(6)A37) in tRNAs that read codons beginning with adenine. Is involved in the transfer of the threonylcarbamoyl moiety of threonylcarbamoyl-AMP (TC-AMP) to the N6 group of A37, together with TsaE and TsaB. TsaD likely plays a direct catalytic role in this reaction. The protein is tRNA N6-adenosine threonylcarbamoyltransferase of Crocosphaera subtropica (strain ATCC 51142 / BH68) (Cyanothece sp. (strain ATCC 51142)).